The sequence spans 122 residues: Large ribosomal subunit protein uL14 (122 aa).

It belongs to the universal ribosomal protein uL14 family. In terms of assembly, part of the 50S ribosomal subunit. Forms a cluster with proteins L3 and L19. In the 70S ribosome, L14 and L19 interact and together make contacts with the 16S rRNA in bridges B5 and B8.

Binds to 23S rRNA. Forms part of two intersubunit bridges in the 70S ribosome. This Shouchella clausii (strain KSM-K16) (Alkalihalobacillus clausii) protein is Large ribosomal subunit protein uL14.